A 409-amino-acid chain; its full sequence is MQKSLATFFISPPEIPTQHGPDNILYDFNDGARVLLPEGKWHVRLLDADSGNILFCCDINNGWVTSSKKYFVRFRIQVFRQGEDSPLLDETLNLTDRDVLISFPTGTLGDLLGWFPYAERFQSLHQCRLECTMAQDIIDLLAPQYPQICFSTPEKPRTTEPYATYRVGLYFGGDTNNQPVDFRQVGFHRSAGYILGVDPREAPVRLNLSAPCTIREPYVCIATQSTCQAKYWNNGTGWSEVVAHLKSLGYRVLCIDREAHYGQGFVWNHIPWGAEDFTGSFPLQERVNLLRHASFFIGLASGLSWLAWATGIPVVLISGFSLPDSEFYTPWRVFNSHGCNGCWDDTSLNFDHKDFLWCPRHKNTDRQFECTRLITGTQVNGVISRLHASLMKQGDKACLTKGTNNEQGL.

Residues T107, L108, and G109 each contribute to the ADP-D-glycero-beta-D-manno-heptose site. D110 serves as the catalytic Proton acceptor. Q224, T226, K230, R257, G302, and E326 together coordinate ADP-D-glycero-beta-D-manno-heptose. Residues C339, C342, C358, and C370 each coordinate Fe(3+).

This sequence belongs to the glycosyltransferase 9 family. Homododecamer composed of 6 homodimers forming a ring. Requires Fe(3+) as cofactor.

It localises to the cytoplasm. The enzyme catalyses ADP-D-glycero-beta-D-manno-heptose + L-seryl-[protein] = O-(D-glycero-alpha-D-manno-heptosyl)-L-seryl-[protein] + ADP + H(+). It catalyses the reaction ADP-L-glycero-beta-D-manno-heptose + L-seryl-[protein] = O-(L-glycero-alpha-D-manno-heptosyl)-L-seryl-[protein] + ADP + H(+). In terms of biological role, glycosylates autotransporter CARC. By glycosylating CARC, involved in the colonization of the mouse host gastrointestinal tract. This is Autotransproter heptosyltransferase BAHTCr from Citrobacter rodentium (strain ICC168) (Citrobacter freundii biotype 4280).